The primary structure comprises 378 residues: Sperm microtubule associated protein 2 (378 aa).

Disordered regions lie at residues 1–35 (MGEL…SDGS) and 47–79 (WLQS…LPEV). Residues 47–56 (WLQSSQATTE) show a composition bias toward polar residues. Over residues 61–77 (DPEEEIPPEEMVGEELP) the composition is skewed to acidic residues. 7 THEG repeats span residues 113–132 (AKCR…PKFN), 179–198 (TITV…PKRF), 217–236 (STLE…PKIR), 253–272 (AAQM…PRAP), 285–304 (PKPY…PKAL), 321–340 (VTKN…PKIR), and 355–374 (ASLV…PKHI). Ser-290 carries the phosphoserine modification.

In terms of assembly, interacts with CCT5.

It is found in the nucleus. Functionally, may be involved (but not essential) in spermatogenesis. The chain is Sperm microtubule associated protein 2 from Rattus norvegicus (Rat).